The primary structure comprises 207 residues: ATP-dependent Clp protease proteolytic subunit 1 (207 aa).

The active-site Nucleophile is the serine 103. Histidine 128 is a catalytic residue.

This sequence belongs to the peptidase S14 family. In terms of assembly, fourteen ClpP subunits assemble into 2 heptameric rings which stack back to back to give a disk-like structure with a central cavity, resembling the structure of eukaryotic proteasomes.

The protein localises to the cytoplasm. The enzyme catalyses Hydrolysis of proteins to small peptides in the presence of ATP and magnesium. alpha-casein is the usual test substrate. In the absence of ATP, only oligopeptides shorter than five residues are hydrolyzed (such as succinyl-Leu-Tyr-|-NHMec, and Leu-Tyr-Leu-|-Tyr-Trp, in which cleavage of the -Tyr-|-Leu- and -Tyr-|-Trp bonds also occurs).. Its function is as follows. Cleaves peptides in various proteins in a process that requires ATP hydrolysis. Has a chymotrypsin-like activity. Plays a major role in the degradation of misfolded proteins. The chain is ATP-dependent Clp protease proteolytic subunit 1 from Synechococcus sp. (strain CC9605).